A 329-amino-acid chain; its full sequence is GTPase Obg (329 aa).

The region spanning 1-159 (MQFIDEAKIF…MWVWLHLKLL (159 aa)) is the Obg domain. Positions 160 to 327 (SDVGLVGLPN…LLANILSELQ (168 aa)) constitute an OBG-type G domain. Residues 166 to 173 (GLPNAGKS), 191 to 195 (FTTLT), 212 to 215 (DIPG), 279 to 282 (TKTD), and 308 to 310 (SSY) contribute to the GTP site. 2 residues coordinate Mg(2+): S173 and T193.

Belongs to the TRAFAC class OBG-HflX-like GTPase superfamily. OBG GTPase family. Monomer. The cofactor is Mg(2+).

Its subcellular location is the cytoplasm. Functionally, an essential GTPase which binds GTP, GDP and possibly (p)ppGpp with moderate affinity, with high nucleotide exchange rates and a fairly low GTP hydrolysis rate. Plays a role in control of the cell cycle, stress response, ribosome biogenesis and in those bacteria that undergo differentiation, in morphogenesis control. In Orientia tsutsugamushi (strain Ikeda) (Rickettsia tsutsugamushi), this protein is GTPase Obg.